The chain runs to 274 residues: Cytochrome b-c1 complex subunit Rieske, mitochondrial (274 aa).

At 79–103 (SHTDIKVPDFSDYRRAEVLDSTKSS) the chain is on the mitochondrial matrix side. Residues 104 to 140 (KESSEARKGFSYLVTATTTVGVAYAAKNAVSQFVSSM) traverse the membrane as a helical segment. At 141–274 (SASADVLAMS…FTSGDVVVVG (134 aa)) the chain is on the mitochondrial intermembrane side. Residues 187–272 (EAAVEVSQLR…YEFTSGDVVV (86 aa)) enclose the Rieske domain. [2Fe-2S] cluster-binding residues include Cys217, His219, Cys236, His239, and Ser241. A disulfide bond links Cys222 and Cys238.

Belongs to the Rieske iron-sulfur protein family. As to quaternary structure, component of the ubiquinol-cytochrome c oxidoreductase (cytochrome b-c1 complex, complex III, CIII), a multisubunit enzyme composed of 11 subunits. The complex is composed of 3 respiratory subunits cytochrome b, cytochrome c1 and Rieske protein UQCRFS1, 2 core protein subunits UQCRC1/QCR1 and UQCRC2/QCR2, and 6 low-molecular weight protein subunits UQCRH/QCR6, UQCRB/QCR7, UQCRQ/QCR8, UQCR10/QCR9, UQCR11/QCR10 and subunit 9, the cleavage product of Rieske protein UQCRFS1. The complex exists as an obligatory dimer and forms supercomplexes (SCs) in the inner mitochondrial membrane with NADH-ubiquinone oxidoreductase (complex I, CI) and cytochrome c oxidase (complex IV, CIV), resulting in different assemblies (supercomplex SCI(1)III(2)IV(1) and megacomplex MCI(2)III(2)IV(2)). Incorporation of the Rieske protein UQCRFS1 is the penultimate step in complex III assembly. Interacts with TTC19, which is involved in the clearance of UQCRFS1 fragments. In terms of assembly, component of the ubiquinol-cytochrome c oxidoreductase (cytochrome b-c1 complex, complex III, CIII). Subunit 9 corresponds to the mitochondrial targeting sequence (MTS) of Rieske protein UQCRFS1. It is retained after processing and incorporated inside complex III, where it remains bound to the complex and localizes between the 2 core subunits UQCRC1/QCR1 and UQCRC2/QCR2. It depends on [2Fe-2S] cluster as a cofactor. Proteolytic processing is necessary for the correct insertion of UQCRFS1 in the complex III dimer. Several fragments are generated during UQCRFS1 insertion, most probably due to the endogenous matrix-processing peptidase (MPP) activity of the 2 core protein subunits UQCRC1/QCR1 and UQCRC2/QCR2, which are homologous to the 2 mitochondrial-processing peptidase (MPP) subunits beta-MPP and alpha-MPP respectively. The action of the protease is also necessary for the clearance of the UQCRFS1 fragments.

The protein localises to the mitochondrion inner membrane. The enzyme catalyses a quinol + 2 Fe(III)-[cytochrome c](out) = a quinone + 2 Fe(II)-[cytochrome c](out) + 2 H(+)(out). Functionally, component of the ubiquinol-cytochrome c oxidoreductase, a multisubunit transmembrane complex that is part of the mitochondrial electron transport chain which drives oxidative phosphorylation. The respiratory chain contains 3 multisubunit complexes succinate dehydrogenase (complex II, CII), ubiquinol-cytochrome c oxidoreductase (cytochrome b-c1 complex, complex III, CIII) and cytochrome c oxidase (complex IV, CIV), that cooperate to transfer electrons derived from NADH and succinate to molecular oxygen, creating an electrochemical gradient over the inner membrane that drives transmembrane transport and the ATP synthase. The cytochrome b-c1 complex catalyzes electron transfer from ubiquinol to cytochrome c, linking this redox reaction to translocation of protons across the mitochondrial inner membrane, with protons being carried across the membrane as hydrogens on the quinol. In the process called Q cycle, 2 protons are consumed from the matrix, 4 protons are released into the intermembrane space and 2 electrons are passed to cytochrome c. The Rieske protein is a catalytic core subunit containing a [2Fe-2S] iron-sulfur cluster. It cycles between 2 conformational states during catalysis to transfer electrons from the quinol bound in the Q(0) site in cytochrome b to cytochrome c1. Incorporation of UQCRFS1 is the penultimate step in complex III assembly. Component of the ubiquinol-cytochrome c oxidoreductase (cytochrome b-c1 complex, complex III, CIII). UQCRFS1 undergoes proteolytic processing once it is incorporated in the complex III dimer. One of the fragments, called subunit 9, corresponds to its mitochondrial targeting sequence (MTS). The proteolytic processing is necessary for the correct insertion of UQCRFS1 in the complex III dimer, but the persistence of UQCRFS1-derived fragments may prevent newly imported UQCRFS1 to be processed and assembled into complex III and is detrimental for the complex III structure and function. This Rattus norvegicus (Rat) protein is Cytochrome b-c1 complex subunit Rieske, mitochondrial (Uqcrfs1).